The primary structure comprises 418 residues: Zinc metalloprotease RasP (418 aa).

The next 4 helical transmembrane spans lie at 5 to 25, 170 to 190, 345 to 365, and 390 to 410; these read LAFI…HLYF, MAIF…LLGL, VIFF…MPIP, and EGAI…VVTW. Zn(2+) is bound at residue H18. Residue E19 is part of the active site. H22 is a Zn(2+) binding site. A PDZ domain is found at 183–267; that stretch reads GFVILLGLSL…ALQTNATLSQ (85 aa).

This sequence belongs to the peptidase M50B family. The cofactor is Zn(2+).

It localises to the cell membrane. In terms of biological role, is responsible for Site-2 cleavage of the RsiW anti-sigma factor. This results, after a third proteolytic step catalyzed by the ClpXP protease, in the release of SigW and the transcription activation of the genes under the control of the sigma-W factor. In Shouchella clausii (strain KSM-K16) (Alkalihalobacillus clausii), this protein is Zinc metalloprotease RasP (rasP).